The sequence spans 86 residues: Serine protease inhibitor Kazal-type 2 (86 aa).

Positions 1–16 (MLRLVLLLLATDFAAS) are cleaved as a signal peptide. The Kazal-like domain maps to 32–86 (QFRTPDCHRFDYPVCSKHLSPVCGTDMNTYGNECTLCMKIREDGSHINIIKDEPC). 3 cysteine pairs are disulfide-bonded: C38-C68, C46-C65, and C54-C86.

Its subcellular location is the secreted. It is found in the cytoplasmic vesicle. It localises to the secretory vesicle. The protein localises to the acrosome. Its function is as follows. As a strong inhibitor of acrosin, it is required for normal spermiogenesis. It probably hinders premature activation of proacrosin and other proteases, thus preventing the cascade of events leading to spermiogenesis defects. May be involved in the regulation of serine protease-dependent germ cell apoptosis. It also inhibits trypsin. The protein is Serine protease inhibitor Kazal-type 2 (Spink2) of Rattus norvegicus (Rat).